Here is a 291-residue protein sequence, read N- to C-terminus: Small ribosomal subunit protein uS2 (291 aa).

A compositionally biased stretch (acidic residues) spans 238–247 (DEESGDELDE). Residues 238-291 (DEESGDELDESVSLHEEGREITDYENYTPPEEREYSVNDEGDVFDEDESLYEGR) are disordered. The segment covering 249–259 (VSLHEEGREIT) has biased composition (basic and acidic residues). The span at 274 to 291 (VNDEGDVFDEDESLYEGR) shows a compositional bias: acidic residues.

It belongs to the universal ribosomal protein uS2 family.

This is Small ribosomal subunit protein uS2 (rpsB) from Treponema pallidum (strain Nichols).